We begin with the raw amino-acid sequence, 121 residues long: Large ribosomal subunit protein uL24 (121 aa).

Residues 1–23 (MVRIESSQPRKQRKARYDAPSHM) are disordered.

Belongs to the universal ribosomal protein uL24 family. Part of the 50S ribosomal subunit.

In terms of biological role, one of two assembly initiator proteins, it binds directly to the 5'-end of the 23S rRNA, where it nucleates assembly of the 50S subunit. Functionally, located at the polypeptide exit tunnel on the outside of the subunit. The sequence is that of Large ribosomal subunit protein uL24 from Methanoregula boonei (strain DSM 21154 / JCM 14090 / 6A8).